The sequence spans 744 residues: Cytosolic neutral trehalase (744 aa).

Residues Asp99, Asp101, Asn103, Gln105, and Asp110 each coordinate Ca(2+). Substrate-binding positions include Arg286, 293 to 294 (WD), Asn330, 339 to 341 (RSQ), Glu406, Arg455, and Gly458. Active-site proton donor/acceptor residues include Asp460 and Glu665.

It belongs to the glycosyl hydrolase 37 family. Ca(2+) is required as a cofactor.

It is found in the cytoplasm. It catalyses the reaction alpha,alpha-trehalose + H2O = alpha-D-glucose + beta-D-glucose. The protein operates within carbohydrate degradation. In terms of biological role, hydrolyzes intracellular trehalose to glucose. The polypeptide is Cytosolic neutral trehalase (Neurospora crassa (strain ATCC 24698 / 74-OR23-1A / CBS 708.71 / DSM 1257 / FGSC 987)).